The chain runs to 237 residues: 1-(5-phosphoribosyl)-5-[(5-phosphoribosylamino)methylideneamino] imidazole-4-carboxamide isomerase (237 aa).

The active-site Proton acceptor is the aspartate 8. Aspartate 129 functions as the Proton donor in the catalytic mechanism.

It belongs to the HisA/HisF family.

The protein localises to the cytoplasm. It carries out the reaction 1-(5-phospho-beta-D-ribosyl)-5-[(5-phospho-beta-D-ribosylamino)methylideneamino]imidazole-4-carboxamide = 5-[(5-phospho-1-deoxy-D-ribulos-1-ylimino)methylamino]-1-(5-phospho-beta-D-ribosyl)imidazole-4-carboxamide. Its pathway is amino-acid biosynthesis; L-histidine biosynthesis; L-histidine from 5-phospho-alpha-D-ribose 1-diphosphate: step 4/9. This Roseiflexus sp. (strain RS-1) protein is 1-(5-phosphoribosyl)-5-[(5-phosphoribosylamino)methylideneamino] imidazole-4-carboxamide isomerase.